Here is a 569-residue protein sequence, read N- to C-terminus: ABC1 family protein MCP2 (569 aa).

A mitochondrion-targeting transit peptide spans 1–18 (MMTKAFFNKLPFEVFRRY). At 19–34 (VRTGKSIPQRSPRTRK) the chain is on the mitochondrial matrix side. The chain crosses the membrane as a helical span at residues 35–51 (SLLVGGTIASAVVLYNF). The Mitochondrial intermembrane portion of the chain corresponds to 52–569 (NDTFHDSVKH…KFIPKTWLSS (518 aa)).

This sequence belongs to the protein kinase superfamily. ADCK protein kinase family.

It is found in the mitochondrion. It localises to the mitochondrion inner membrane. Its function is as follows. Component of MIOREX complexes, large expressome-like assemblies of ribosomes with factors involved in all the steps of post-transcriptional gene expression. Involved in mitochondrial lipid homeostasis. This is ABC1 family protein MCP2 from Saccharomyces cerevisiae (strain ATCC 204508 / S288c) (Baker's yeast).